A 40-amino-acid chain; its full sequence is Photosystem II reaction center protein J (40 aa).

Residues 8-28 traverse the membrane as a helical segment; it reads IPLWVVATIAGLGVITVVGIF.

It belongs to the PsbJ family. In terms of assembly, PSII is composed of 1 copy each of membrane proteins PsbA, PsbB, PsbC, PsbD, PsbE, PsbF, PsbH, PsbI, PsbJ, PsbK, PsbL, PsbM, PsbT, PsbX, PsbY, PsbZ, Psb30/Ycf12, peripheral proteins PsbO, CyanoQ (PsbQ), PsbU, PsbV and a large number of cofactors. It forms dimeric complexes.

It localises to the cellular thylakoid membrane. One of the components of the core complex of photosystem II (PSII). PSII is a light-driven water:plastoquinone oxidoreductase that uses light energy to abstract electrons from H(2)O, generating O(2) and a proton gradient subsequently used for ATP formation. It consists of a core antenna complex that captures photons, and an electron transfer chain that converts photonic excitation into a charge separation. The polypeptide is Photosystem II reaction center protein J (Nostoc sp. (strain PCC 7120 / SAG 25.82 / UTEX 2576)).